The chain runs to 353 residues: Ion-translocating oxidoreductase complex subunit D (353 aa).

Helical transmembrane passes span 20–40 (IMLL…YYFG), 44–64 (IIQV…ILHL), 77–108 (SALL…AIII), and 123–143 (PAMV…TSWL). Thr187 carries the FMN phosphoryl threonine modification. The next 4 helical transmembrane spans lie at 214-234 (VIAG…GVFL), 242-262 (WHIP…GWLL), 267-287 (LVTP…FFIA), and 301-318 (LLYG…RSYG).

It belongs to the NqrB/RnfD family. As to quaternary structure, the complex is composed of six subunits: RnfA, RnfB, RnfC, RnfD, RnfE and RnfG. It depends on FMN as a cofactor.

Its subcellular location is the cell inner membrane. In terms of biological role, part of a membrane-bound complex that couples electron transfer with translocation of ions across the membrane. The chain is Ion-translocating oxidoreductase complex subunit D from Erwinia tasmaniensis (strain DSM 17950 / CFBP 7177 / CIP 109463 / NCPPB 4357 / Et1/99).